A 409-amino-acid polypeptide reads, in one-letter code: uncharacterized protein (409 aa).

The first 39 residues, 1 to 39 (MVSDSKLELPLPVNQQKPRRRRILKVHLLIAALILSAVG), serve as a signal peptide directing secretion. The Zn(2+) site is built by histidine 67, aspartate 69, glutamate 181, histidine 250, and histidine 271.

It belongs to the metallo-dependent hydrolases superfamily. Peptidase M19 family. As to quaternary structure, interacts with dil1. Zn(2+) is required as a cofactor.

The catalysed reaction is an L-aminoacyl-L-amino acid + H2O = 2 an L-alpha-amino acid. This is an uncharacterized protein from Schizosaccharomyces pombe (strain 972 / ATCC 24843) (Fission yeast).